Here is a 447-residue protein sequence, read N- to C-terminus: Probable ribonuclease FAU-1 (447 aa).

The segment at 424-447 (PEAPGGKICTPEGLTSAPPRSSSA) is disordered.

This sequence belongs to the FAU-1 family.

In terms of biological role, probable RNase involved in rRNA stability through maturation and/or degradation of precursor rRNAs. Binds to RNA in loop regions with AU-rich sequences. The protein is Probable ribonuclease FAU-1 of Pyrobaculum neutrophilum (strain DSM 2338 / JCM 9278 / NBRC 100436 / V24Sta) (Thermoproteus neutrophilus).